We begin with the raw amino-acid sequence, 337 residues long: Anthranilate phosphoribosyltransferase (337 aa).

5-phospho-alpha-D-ribose 1-diphosphate contacts are provided by residues Gly-81, 84–85 (GD), Ser-89, 91–94 (NVST), 109–117 (KHGNRAASS), and Ala-121. Gly-81 provides a ligand contact to anthranilate. Ser-93 lines the Mg(2+) pocket. Asn-112 contacts anthranilate. Arg-167 contacts anthranilate. Mg(2+) is bound by residues Asp-226 and Glu-227.

It belongs to the anthranilate phosphoribosyltransferase family. Homodimer. Mg(2+) is required as a cofactor.

It carries out the reaction N-(5-phospho-beta-D-ribosyl)anthranilate + diphosphate = 5-phospho-alpha-D-ribose 1-diphosphate + anthranilate. It functions in the pathway amino-acid biosynthesis; L-tryptophan biosynthesis; L-tryptophan from chorismate: step 2/5. Functionally, catalyzes the transfer of the phosphoribosyl group of 5-phosphorylribose-1-pyrophosphate (PRPP) to anthranilate to yield N-(5'-phosphoribosyl)-anthranilate (PRA). In Methylobacterium sp. (strain 4-46), this protein is Anthranilate phosphoribosyltransferase.